Reading from the N-terminus, the 777-residue chain is CRISPR system single-strand-specific deoxyribonuclease Cas10/Csm1 (subtype III-A) (777 aa).

The region spanning Met1–Gly106 is the HD domain. Residues Arg513–Arg660 enclose the GGDEF domain.

This sequence belongs to the CRISPR-associated Cas10/Csm1 family. As to quaternary structure, probably part of the Csm effector complex, that includes Cas10, Csm2, Csm3, Csm4, Csm5 and mature crRNA. Will form a homodimer in solution, interacts with Csm4, which is a tighter, better association than the homodimeric Cas10 and uses the same interface for interaction. A divalent metal cation serves as cofactor.

Its activity is regulated as follows. ssDNase activity is inhibited by EDTA. In terms of biological role, CRISPR (clustered regularly interspaced short palindromic repeat) is an adaptive immune system that provides protection against mobile genetic elements (viruses, transposable elements and conjugative plasmids). CRISPR clusters contain spacers, sequences complementary to antecedent mobile elements, and target invading nucleic acids. CRISPR clusters are transcribed and processed into CRISPR RNA (crRNA). The type III-A Csm effector complex binds crRNA and acts as a crRNA-guided RNase, DNase and cyclic oligoadenylate synthase; binding of target RNA cognate to the crRNA is required for all activities. A single-strand deoxyribonuclease (ssDNase) which digests linear and circular ssDNA; has 5'-3' and 3'-5' exonuclease activity as well as a less efficient endonuclease activity. Has a minimal size requirement; 100 nucleotide ssDNA (nt) is more efficiently digested than 50 or 25 nt ssDNA, while 14 nt ssDNA is not cleaved at all. It has no activity on dsDNA or ssRNA. Functionally, ssDNase activity is stimulated in the ternary Csm effector complex; binding of cognate target RNA activates the ssDNase, as the target RNA is degraded ssDNA activity decreases. Its function is as follows. When associated with the ternary Csm effector complex (the crRNA, Cas proteins and a cognate target ssRNA) synthesizes cyclic oligoadenylates (cOA) from ATP. cOAs are second messengers that stimulate the ssRNase activity of Csm6, inducing an antiviral state important for defense against invading nucleic acids. This Thermococcus onnurineus (strain NA1) protein is CRISPR system single-strand-specific deoxyribonuclease Cas10/Csm1 (subtype III-A).